The sequence spans 116 residues: Protein RALF-like 33 (116 aa).

An N-terminal signal peptide occupies residues 1–23; it reads MRGLSTKPVAIIIAILTVHFLFA. The propeptide at 24 to 67 is removed in mature form; sequence AVTSQSSGDFVPIESKCNGTIAECSLSTAEEEFEMDSEINRRIL. The N-linked (GlcNAc...) asparagine glycan is linked to N41. 2 cysteine pairs are disulfide-bonded: C85–C95 and C108–C114.

It belongs to the plant rapid alkalinization factor (RALF) family. In terms of processing, proteolytically cleaved, probably by S1P, a subtilisin-like serine protease (subtilase). As to expression, expressed in roots, stems, leaves and plants.

The protein localises to the secreted. Cell signaling peptide that may regulate plant stress, growth, and development. Mediates a rapid alkalinization of extracellular space by mediating a transient increase in the cytoplasmic Ca(2+) concentration leading to a calcium-dependent signaling events through a cell surface receptor and a concomitant activation of some intracellular mitogen-activated protein kinases. The protein is Protein RALF-like 33 (RALFL33) of Arabidopsis thaliana (Mouse-ear cress).